The following is a 588-amino-acid chain: MTLMIDENFKKQLAQRRERVEDLFYFENSKEIGRGTYGLVYKAVPKKQNGQFPNKEYALKMIEGQGFSMSACREIALFRELRHPNLICLQRVFLTNEKKVWLLLDYAEHDLWHVIKHHRTAKSKKVPIMVPRNMVKNILFQILSGMHYLHSNWVLHRDLKPANILLMGDGPPDMRGRVKIADLGFSRIYANPLKPMAELDPVVVTFWYRAPELLLGAKHYTKAIDVWAIGCIFAELLTAEPLFFCKEEDIKAQNPYHYDQVKRIFHLLGYPSDADWPDMKKMPDHQRLLSDARNEGTPIQTFPNSLHRYFDKWKINSQSSPYRLLVKLLTVDPTKRVSCEEAMNDIYFRKMERPPRETDDVFNKYPIPYAKKEQQMTVAPDQAQQQHQQQQVQMQQQPQMGQQQMMGQPQMVQPQMGQPPMGGAHPGVVAPDGHPHQMMQQQQHPQQHHMQYQGMHDPMQGGMDEGPQAKMMRMGNVPVGRYAPMPPPYGAPQDYHPQQGPPMVQMMQQPGPSGYYPQRPGQPTGAVPGPGPQGYMNPQMGMQMGMRAPGVPPQGYMPGRGMAPPQMGQQQPGPNQQQQQQWQQQYHR.

The region spanning 26–348 (FENSKEIGRG…CEEAMNDIYF (323 aa)) is the Protein kinase domain. ATP is bound by residues 32-40 (IGRGTYGLV) and Lys-60. Asp-158 serves as the catalytic Proton acceptor. Disordered regions lie at residues 376–426 (MTVA…GAHP), 510–529 (PGPS…AVPG), and 546–588 (MRAP…QYHR). Low complexity predominate over residues 382-426 (QAQQQHQQQQVQMQQQPQMGQQQMMGQPQMVQPQMGQPPMGGAHP). Positions 557 to 588 (MPGRGMAPPQMGQQQPGPNQQQQQQWQQQYHR) are enriched in low complexity.

The protein belongs to the protein kinase superfamily. CMGC Ser/Thr protein kinase family. CDC2/CDKX subfamily. Component of the Mediator complex. Requires Mg(2+) as cofactor.

The protein resides in the nucleus. It carries out the reaction L-seryl-[protein] + ATP = O-phospho-L-seryl-[protein] + ADP + H(+). The enzyme catalyses L-threonyl-[protein] + ATP = O-phospho-L-threonyl-[protein] + ADP + H(+). The catalysed reaction is [DNA-directed RNA polymerase] + ATP = phospho-[DNA-directed RNA polymerase] + ADP + H(+). Component of the Mediator complex, a coactivator involved in regulated gene transcription of nearly all RNA polymerase II-dependent genes. Mediator functions as a bridge to convey information from gene-specific regulatory proteins to the basal RNA polymerase II transcription machinery. Mediator is recruited to promoters by direct interactions with regulatory proteins and serves as a scaffold for the assembly of a functional pre-initiation complex with RNA polymerase II and the general transcription factors. Phosphorylates the CTD (C-terminal domain) of the large subunit of RNA polymerase II (RNAp II), which may inhibit the formation of a transcription initiation complex. This Caenorhabditis elegans protein is Cyclin-dependent kinase 8 (cdk-8).